Consider the following 218-residue polypeptide: Probable nicotinate-nucleotide adenylyltransferase (218 aa).

Belongs to the NadD family.

It catalyses the reaction nicotinate beta-D-ribonucleotide + ATP + H(+) = deamido-NAD(+) + diphosphate. Its pathway is cofactor biosynthesis; NAD(+) biosynthesis; deamido-NAD(+) from nicotinate D-ribonucleotide: step 1/1. Its function is as follows. Catalyzes the reversible adenylation of nicotinate mononucleotide (NaMN) to nicotinic acid adenine dinucleotide (NaAD). The sequence is that of Probable nicotinate-nucleotide adenylyltransferase from Acidithiobacillus ferrooxidans (strain ATCC 23270 / DSM 14882 / CIP 104768 / NCIMB 8455) (Ferrobacillus ferrooxidans (strain ATCC 23270)).